The following is a 294-amino-acid chain: Proteasome subunit beta 1 (294 aa).

Positions 1 to 65 (MTADRPALRT…MESGDLAPHG (65 aa)) are cleaved as a propeptide — removed in mature form; by autocatalysis. T66 acts as the Nucleophile in catalysis.

Belongs to the peptidase T1B family. As to quaternary structure, the 20S proteasome core is composed of 14 alpha and 14 beta subunits that assemble into four stacked heptameric rings, resulting in a barrel-shaped structure. The two inner rings, each composed of seven catalytic beta subunits, are sandwiched by two outer rings, each composed of seven alpha subunits. All four combinations of alpha- and beta-subunits (beta2-alpha1, beta2-alpha2, beta1-alpha2 and beta1-alpha1) yield fully assembled and proteolytically active proteasomes. The catalytic chamber with the active sites is on the inside of the barrel. Has probably a gated structure, the ends of the cylinder being occluded by the N-termini of the alpha-subunits. Is likely capped by the proteasome-associated ATPase, ARC.

The protein resides in the cytoplasm. The enzyme catalyses Cleavage of peptide bonds with very broad specificity.. It participates in protein degradation; proteasomal Pup-dependent pathway. The formation of the proteasomal ATPase ARC-20S proteasome complex, likely via the docking of the C-termini of ARC into the intersubunit pockets in the alpha-rings, may trigger opening of the gate for substrate entry. Interconversion between the open-gate and close-gate conformations leads to a dynamic regulation of the 20S proteasome proteolysis activity. Component of the proteasome core, a large protease complex with broad specificity involved in protein degradation. The R.erythropolis proteasomes are able to cleave oligopeptides after Tyr, Phe and Leu, very poorly after Arg but not after Glu. Thus, displays chymotrypsin-like activity, low trypsin-like activity but no caspase-like activity. The sequence is that of Proteasome subunit beta 1 from Rhodococcus erythropolis (Arthrobacter picolinophilus).